The following is a 160-amino-acid chain: Cytochrome b6-f complex subunit 4 (160 aa).

3 consecutive transmembrane segments (helical) span residues 36–56 (LLYIFPVVILGTIACNVGLAV), 95–115 (LLGVLLMVSVPAGLLTVPFLE), and 131–151 (TVFLIGTAVALWLGIGATLPI).

This sequence belongs to the cytochrome b family. PetD subfamily. In terms of assembly, the 4 large subunits of the cytochrome b6-f complex are cytochrome b6, subunit IV (17 kDa polypeptide, petD), cytochrome f and the Rieske protein, while the 4 small subunits are petG, petL, petM and petN. The complex functions as a dimer.

It is found in the plastid. It localises to the chloroplast thylakoid membrane. Functionally, component of the cytochrome b6-f complex, which mediates electron transfer between photosystem II (PSII) and photosystem I (PSI), cyclic electron flow around PSI, and state transitions. This Solanum bulbocastanum (Wild potato) protein is Cytochrome b6-f complex subunit 4.